Consider the following 87-residue polypeptide: Protein moa-2 (87 aa).

Positions 23–87 (GTAMRHEPSR…VWTASREESS (65 aa)) are disordered. Composition is skewed to basic and acidic residues over residues 26 to 39 (MRHE…ESAP) and 50 to 63 (RNEH…EREP).

This is Protein moa-2 from Caenorhabditis elegans.